The following is a 461-amino-acid chain: Serine/threonine-protein kinase VHS1 (461 aa).

The region spanning 12 to 337 is the Protein kinase domain; the sequence is YLITSQIGEG…KEVSSITSFT (326 aa). ATP-binding positions include 18–26 and K41; that span reads IGEGAYGLV. D185 serves as the catalytic Proton acceptor. Residues 384–433 are disordered; that stretch reads LSYTSSSEEEDGIKEGIDDDNGSRSGSFGTLDTDTGLHSSFTSTSCESDN. The span at 390 to 403 shows a compositional bias: acidic residues; that stretch reads SEEEDGIKEGIDDD. Over residues 406-433 the composition is skewed to polar residues; the sequence is SRSGSFGTLDTDTGLHSSFTSTSCESDN.

The protein belongs to the protein kinase superfamily. Ser/Thr protein kinase family.

The protein localises to the cytoplasm. The enzyme catalyses L-seryl-[protein] + ATP = O-phospho-L-seryl-[protein] + ADP + H(+). The catalysed reaction is L-threonyl-[protein] + ATP = O-phospho-L-threonyl-[protein] + ADP + H(+). In terms of biological role, probable serine/threonine protein kinase involved in the G1-S transition. The sequence is that of Serine/threonine-protein kinase VHS1 (VHS1) from Saccharomyces cerevisiae (strain ATCC 204508 / S288c) (Baker's yeast).